The following is a 518-amino-acid chain: Membrane-bound lytic murein transglycosylase F (518 aa).

Positions 1 to 21 (MKKLKINYLFIGILALLLAVA) are cleaved as a signal peptide. The tract at residues 22–269 (LWPSIPWFGK…RIEEKYLGHG (248 aa)) is non-LT domain. The segment at 270–518 (DDFDYVDTRT…SRKGSEEKQN (249 aa)) is LT domain. The active site involves Glu-314.

The protein in the N-terminal section; belongs to the bacterial solute-binding protein 3 family. In the C-terminal section; belongs to the transglycosylase Slt family.

It is found in the cell outer membrane. It catalyses the reaction Exolytic cleavage of the (1-&gt;4)-beta-glycosidic linkage between N-acetylmuramic acid (MurNAc) and N-acetylglucosamine (GlcNAc) residues in peptidoglycan, from either the reducing or the non-reducing ends of the peptidoglycan chains, with concomitant formation of a 1,6-anhydrobond in the MurNAc residue.. Functionally, murein-degrading enzyme that degrades murein glycan strands and insoluble, high-molecular weight murein sacculi, with the concomitant formation of a 1,6-anhydromuramoyl product. Lytic transglycosylases (LTs) play an integral role in the metabolism of the peptidoglycan (PG) sacculus. Their lytic action creates space within the PG sacculus to allow for its expansion as well as for the insertion of various structures such as secretion systems and flagella. In Escherichia coli (strain SMS-3-5 / SECEC), this protein is Membrane-bound lytic murein transglycosylase F.